Consider the following 1430-residue polypeptide: Target of rapamycin complex 2 subunit TSC11 (1430 aa).

The segment at 1-62 (MSIPHSAKQS…TITNESSKRN (62 aa)) is disordered. Composition is skewed to polar residues over residues 7–26 (AKQS…TTPL) and 35–44 (NSSTQISSAK). Position 19 is a phosphoserine (Ser-19). Positions 45 to 57 (NITSSSPSTITNE) are enriched in low complexity. A phosphoserine mark is found at Ser-81, Ser-84, Ser-87, and Ser-141. Residues 91–180 (ARRTRSTMTK…EKHIFDLKQQ (90 aa)) are a coiled coil. The tract at residues 182–285 (DKKRQRSLTT…NLTGDTEKDL (104 aa)) is disordered. Over residues 233-265 (TTPTSGTERNSQQNLNRNSTVNSRNNENHSTLS) the composition is skewed to polar residues. Residues 995-1100 (SVVAVADQAL…FQQKSRLPLH (106 aa)) form the N-terminal Ras-GEF domain.

Belongs to the RICTOR family. In terms of assembly, the target of rapamycin complex 2 (TORC2) is composed of at least AVO1, AVO2, BIT61, LST8, TOR2 and TSC11. TORC2 forms a homodimer. Contrary to TORC1, TORC2 does not bind to and is not sensitive to FKBP-rapamycin. TSC11 binds to the N-terminal HEAT repeat region in TOR2 and is required for TORC2 integrity by tethering AVO1 and AVO2 to the complex. In terms of processing, phosphorylated by TOR2; when part of TORC2.

The protein localises to the cell membrane. The protein resides in the vacuole membrane. Essential component of TORC2, which regulates cell cycle-dependent polarization of the actin-cytoskeleton and cell wall integrity. TORC2 controls polarity of the actin cytoskeleton, which is required for orienting the secretory pathway toward discrete growth sites, via the RHO1/PKC1/MAPK cell integrity pathway. TSC11 may exert its functions through two distinct mechanisms, one mediated by AVO1 and the other mediated by AVO2 and SLM1. This chain is Target of rapamycin complex 2 subunit TSC11 (TSC11), found in Saccharomyces cerevisiae (strain ATCC 204508 / S288c) (Baker's yeast).